An 862-amino-acid chain; its full sequence is Fork head protein homolog 2 (862 aa).

Residues 83-152 enclose the FHA domain; sequence VSIGRNTDPL…NGAKVNFQRT (70 aa). Positions 339–430 form a DNA-binding region, fork-head; that stretch reads VKPPHSYATM…QQEFLNKWNT (92 aa). Disordered stretches follow at residues 498–528, 611–663, 698–730, and 750–846; these read PSKG…QEQR, SDSA…GTTT, PERG…LQTS, and ESNN…ANAK. The segment covering 504 to 520 has biased composition (low complexity); it reads PASQQSQPPVSHQNQSQ. Over residues 611 to 644 the composition is skewed to polar residues; sequence SDSADKSTNNNGGTKMNLPAISTSSLDENGNLEP. Positions 645–655 are enriched in low complexity; the sequence is TTTTSSGNSNS. At Ser-708 the chain carries Phosphoserine. Residues 712 to 726 are compositionally biased toward low complexity; the sequence is SNSNNTNNNGANNSN. 2 stretches are compositionally biased toward polar residues: residues 750-770 and 778-788; these read ESNN…NVKS and LQFSSTNNTPA. The span at 804–829 shows a compositional bias: basic and acidic residues; that stretch reads IKAKENENATSEKDSDSNSNDLETKD. The segment covering 830 to 844 has biased composition (polar residues); the sequence is INSSPLKNQGGSTAN. Phosphoserine is present on residues Ser-832 and Ser-833.

As to quaternary structure, interacts with MCM1. Interacts with NDD1. Interacts with the origin recognition complex (ORC) composed of ORC1 to ORC6.

Its subcellular location is the nucleus. The protein resides in the cytoplasm. The protein localises to the cytosol. Transcription factor that regulates the expression of the CLB2 cluster of genes during the G2/M phase of the mitotic cell cycle. The CLB2 cluster of genes includes mitotic regulators such as CLB1, CLB2, CDC5 and CDC20 as well as SWI5 and ACE2, transcription factors required for the subsequent temporal wave of cell cycle regulated gene expression in the M/G1 phase interval. Involved in HMRa silencing. FKH1 and FKH2 associate with the coding regions of active genes and influence, in opposing ways, transcriptional elongation and termination, and coordinate early transcription elongation and pre-mRNA processing. Both FKH1 and FKH2 play a role as regulators of lifespan in collaboration with the anaphase-promoting complex (APC), likely through combined regulation of stress response, genomic stability, and cell cycle regulation. FKH1 and FKH2 function also in controlling yeast cell morphology by preventing preudohyphal growth. Acts as a rate-limiting replication origin activator via its interaction with the origin recognition complex (ORC). The chain is Fork head protein homolog 2 from Saccharomyces cerevisiae (strain ATCC 204508 / S288c) (Baker's yeast).